The primary structure comprises 621 residues: Zinc metalloproteinase-disintegrin-like NaMP (621 aa).

A signal peptide spans 1 to 20 (MIQPLLVAICLVVFPYQGSS). Positions 21 to 188 (TILESGKVRD…GESDETIKKI (168 aa)) are excised as a propeptide. In terms of domain architecture, Peptidase M12B spans 206-402 (KHIELYMVAD…KSAQCILNDP (197 aa)). N-linked (GlcNAc...) asparagine glycans are attached at residues N225, N268, and N319. Intrachain disulfides connect C317-C397, C357-C381, C359-C364, C413-C442, C424-C437, C426-C432, C436-C459, C450-C456, C455-C481, C468-C488, C475-C507, C500-C512, C519-C569, C534-C579, C547-C557, C564-C605, and C599-C610. H342 contributes to the Zn(2+) binding site. E343 is a catalytic residue. Zn(2+) contacts are provided by H346 and H352. One can recognise a Disintegrin domain in the interval 410-496 (TAICGNGFVE…ECPMNHFHMN (87 aa)). The D/ECD-tripeptide signature appears at 474 to 476 (DCD). N551 is a glycosylation site (N-linked (GlcNAc...) asparagine).

This sequence belongs to the venom metalloproteinase (M12B) family. P-III subfamily. P-IIIa sub-subfamily. Monomer. It depends on Zn(2+) as a cofactor. Expressed by the venom gland.

It localises to the secreted. In terms of biological role, snake venom zinc metalloproteinase that inhibits platelet aggregation and degrades fibrinogen. The chain is Zinc metalloproteinase-disintegrin-like NaMP from Naja atra (Chinese cobra).